The following is a 354-amino-acid chain: Guanine nucleotide-binding protein alpha-2 subunit (354 aa).

The G-alpha domain maps to 33–354 (KIYKVLLLGA…QHSLKEAGMF (322 aa)). The tract at residues 36–49 (KVLLLGASDSGKST) is G1 motif. D44, S45, G46, K47, S48, T49, D148, L173, T179, G201, N269, K270, D272, and A326 together coordinate GTP. S48 serves as a coordination point for Mg(2+). The tract at residues 171 to 179 (DILRSRNST) is G2 motif. Residue T179 coordinates Mg(2+). Residues 194 to 203 (IRMFDVGGQR) are G3 motif. Positions 265–272 (ILFLNKFD) are G4 motif. The interval 324–329 (TTAVDT) is G5 motif.

It belongs to the G-alpha family. G proteins are composed of 3 units; alpha, beta and gamma. Binding of the beta-gamma subunit complex (git5-git11) to the alpha subunit (gpa2) facilitates interaction with GPCR git3. Interacts with GPCR git3; the interaction is direct and leads to activation of gpa2 upon glucose stimulation. Interacts with adenylate cyclase cyr1 (via N-terminus); the interaction is direct and serves to activate adenylate cyclase and cAMP-PKA signaling, to repress sexual development and gluconeogenesis. Requires Mg(2+) as cofactor.

It localises to the cell membrane. In terms of biological role, alpha subunit of the heterotrimeric guanine nucleotide-binding protein (G protein) involved in glucose-induced cAMP signaling. Binds to its cognate transmembrane receptor git3, which senses extracellular glucose, and activates cAMP-PKA signaling to repress sexual development and gluconeogenesis. In Schizosaccharomyces pombe (strain 972 / ATCC 24843) (Fission yeast), this protein is Guanine nucleotide-binding protein alpha-2 subunit.